The following is a 160-amino-acid chain: Transcriptional repressor NrdR (160 aa).

Residues 1 to 11 show a composition bias toward polar residues; that stretch reads MRCPSCNSLDT. Residues 1-20 are disordered; it reads MRCPSCNSLDTQVKDSRPTE. Residues 3–34 fold into a zinc finger; the sequence is CPSCNSLDTQVKDSRPTEDSAVIRRRRVCMAC. Residues 49–139 enclose the ATP-cone domain; that stretch reads LTVIKRNGRR…VYRNFREAKD (91 aa).

The protein belongs to the NrdR family. Zn(2+) serves as cofactor.

Negatively regulates transcription of bacterial ribonucleotide reductase nrd genes and operons by binding to NrdR-boxes. The polypeptide is Transcriptional repressor NrdR (Nitrobacter winogradskyi (strain ATCC 25391 / DSM 10237 / CIP 104748 / NCIMB 11846 / Nb-255)).